Reading from the N-terminus, the 808-residue chain is Digalactosyldiacylglycerol synthase 1, chloroplastic (808 aa).

The disordered stretch occupies residues 1–23 (MVKETLIPPSSTSMTTGTSSSSS). The transit peptide at 1–58 (MVKETLIPPSSTSMTTGTSSSSSLSMTLSSTNALSFLSKGWREVWDSADADLQLMRDR) directs the protein to the chloroplast. A compositionally biased stretch (low complexity) spans 10-23 (SSTSMTTGTSSSSS).

This sequence belongs to the glycosyltransferase group 1 family. Glycosyltransferase 4 subfamily.

The protein localises to the plastid. The protein resides in the chloroplast outer membrane. The enzyme catalyses a 1,2-diacyl-3-O-(beta-D-galactosyl)-sn-glycerol + UDP-alpha-D-galactose = a 1,2-diacyl-3-O-[alpha-D-galactosyl-(1-&gt;6)-beta-D-galactosyl]-sn-glycerol + UDP + H(+). Functionally, involved in the synthesis of diacylglycerol galactolipids that are specifically found in thylakoid membranes. Specific for alpha-glycosidic linkages. Responsible for the final assembly of galactolipids in photosynthetic membranes. Digalactosyldiacylglycerol (DGDG) provides stability to the photosystem I (PSI) complex, especially to the PsaA, PsaB, PsaC, PsaL and PsaH subunits. The polypeptide is Digalactosyldiacylglycerol synthase 1, chloroplastic (Arabidopsis thaliana (Mouse-ear cress)).